The chain runs to 678 residues: Growth arrest-specific protein 6 (678 aa).

A signal peptide spans 1 to 30 (MAPSLSPGPAALRRAPQLLLLLLAAECALA). The Gla domain maps to 53 to 94 (FEEAKQGHLERECVEELCSREEAREVFENDPETDYFYPRYLD). C65 and C70 form a disulfide bridge. Residue S71 is modified to Phosphoserine; by FAM20C. The EGF-like 1; calcium-binding domain occupies 116 to 154 (LPDQCTPNPCDRKGTQACQDLMGNFFCLCKAGWGGRLCD). Intrachain disulfides connect C120–C133, C125–C142, C144–C153, C160–C171, C167–C180, C182–C195, C201–C212, C207–C221, C223–C236, C242–C251, C247–C260, C262–C277, C283–C570, and C444–C470. Residues 156-196 (DVNECSQENGGCLQICHNKPGSFHCSCHSGFELSSDGRTCQ) enclose the EGF-like 2; calcium-binding domain. In terms of domain architecture, EGF-like 3; calcium-binding spans 197 to 237 (DIDECADSEACGEARCKNLPGSYSCLCDEGFAYSSQEKACR). In terms of domain architecture, EGF-like 4; calcium-binding spans 238–278 (DVDECLQGRCEQVCVNSPGSYTCHCDGRGGLKLSQDMDTCE). Laminin G-like domains follow at residues 298 to 470 (GRMF…RMQC) and 477 to 670 (GSFY…AHSC). Residues D329 and E331 each coordinate Ca(2+). N420 carries an N-linked (GlcNAc...) asparagine glycan. R440 serves as a coordination point for Ca(2+). Residues T621 and T637 each carry the phosphothreonine modification. A Phosphotyrosine modification is found at Y640. The cysteines at positions 643 and 670 are disulfide-linked. D656 contributes to the Ca(2+) binding site.

In terms of assembly, heterodimer and heterotetramer with AXL. Post-translationally, proteolytically processed after secretion to yield a N-terminal 36 kDa protein and a C-terminal 50 kDa protein including the laminin G-like domains which activates AXL. Gamma-carboxyglutamate residues are formed by vitamin K dependent carboxylation. These residues are essential for the binding of calcium. In terms of tissue distribution, plasma. Isoform 1 and isoform 2 are widely expressed, isoform 1 being expressed at higher levels than isoform 2 in most tissues. Isoform 2 is the predominant form in spleen.

It is found in the secreted. Functionally, ligand for tyrosine-protein kinase receptors AXL, TYRO3 and MER whose signaling is implicated in cell growth and survival, cell adhesion and cell migration. GAS6/AXL signaling plays a role in various processes such as endothelial cell survival during acidification by preventing apoptosis, optimal cytokine signaling during human natural killer cell development, hepatic regeneration, gonadotropin-releasing hormone neuron survival and migration, platelet activation, or regulation of thrombotic responses. Its function is as follows. (Microbial infection) Can bridge virus envelope phosphatidylserine to the TAM receptor tyrosine kinase Axl to mediate viral entry by apoptotic mimicry. Plays a role in Dengue cell entry by apoptotic mimicry. Plays a role in Vaccinia virus cell entry by apoptotic mimicry. Plays a role in ebolavirus and marburgvirus cell entry by apoptotic mimicry. The sequence is that of Growth arrest-specific protein 6 from Homo sapiens (Human).